Reading from the N-terminus, the 445-residue chain is Glycine--tRNA ligase (445 aa).

2 residues coordinate substrate: Arg-97 and Glu-145. ATP contacts are provided by residues 177–179 (RNE), 187–192 (FRTCEF), 262–263 (EV), and 308–311 (GLTR). 192–196 (FEQME) contacts substrate. Residue 304 to 308 (ETSAG) coordinates substrate.

Belongs to the class-II aminoacyl-tRNA synthetase family. In terms of assembly, homodimer.

The protein resides in the cytoplasm. The catalysed reaction is tRNA(Gly) + glycine + ATP = glycyl-tRNA(Gly) + AMP + diphosphate. Catalyzes the attachment of glycine to tRNA(Gly). This is Glycine--tRNA ligase from Borrelia garinii subsp. bavariensis (strain ATCC BAA-2496 / DSM 23469 / PBi) (Borreliella bavariensis).